Reading from the N-terminus, the 270-residue chain is Ribosomal RNA small subunit methyltransferase A (270 aa).

6 residues coordinate S-adenosyl-L-methionine: His-11, Leu-13, Gly-38, Glu-59, Asp-84, and Asn-109.

Belongs to the class I-like SAM-binding methyltransferase superfamily. rRNA adenine N(6)-methyltransferase family. RsmA subfamily.

It is found in the cytoplasm. The catalysed reaction is adenosine(1518)/adenosine(1519) in 16S rRNA + 4 S-adenosyl-L-methionine = N(6)-dimethyladenosine(1518)/N(6)-dimethyladenosine(1519) in 16S rRNA + 4 S-adenosyl-L-homocysteine + 4 H(+). Its function is as follows. Specifically dimethylates two adjacent adenosines (A1518 and A1519) in the loop of a conserved hairpin near the 3'-end of 16S rRNA in the 30S particle. May play a critical role in biogenesis of 30S subunits. The polypeptide is Ribosomal RNA small subunit methyltransferase A (Crocosphaera subtropica (strain ATCC 51142 / BH68) (Cyanothece sp. (strain ATCC 51142))).